Here is a 269-residue protein sequence, read N- to C-terminus: Eukaryotic translation initiation factor 3 subunit G-1 (269 aa).

The RRM domain occupies 188–266 (AAIRISNLSE…LILSVEWSKP (79 aa)).

Belongs to the eIF-3 subunit G family. In terms of assembly, component of the eukaryotic translation initiation factor 3 (eIF-3) complex. The eIF-3 complex interacts with pix.

Its subcellular location is the cytoplasm. Functionally, RNA-binding component of the eukaryotic translation initiation factor 3 (eIF-3) complex, which is involved in protein synthesis of a specialized repertoire of mRNAs and, together with other initiation factors, stimulates binding of mRNA and methionyl-tRNAi to the 40S ribosome. The eIF-3 complex specifically targets and initiates translation of a subset of mRNAs involved in cell proliferation. This subunit can bind 18S rRNA. The sequence is that of Eukaryotic translation initiation factor 3 subunit G-1 from Drosophila willistoni (Fruit fly).